A 229-amino-acid polypeptide reads, in one-letter code: Peptidyl-tRNA hydrolase (229 aa).

Tyr17 lines the tRNA pocket. Catalysis depends on His22, which acts as the Proton acceptor. Residues Phe74, Asn76, and Asn122 each contribute to the tRNA site. The tract at residues 194–229 (AGKTTRPRKPVRQTANAEASNNSPEASATPQNKDNT) is disordered. Positions 207–223 (TANAEASNNSPEASATP) are enriched in low complexity.

This sequence belongs to the PTH family. Monomer.

The protein localises to the cytoplasm. The enzyme catalyses an N-acyl-L-alpha-aminoacyl-tRNA + H2O = an N-acyl-L-amino acid + a tRNA + H(+). Functionally, hydrolyzes ribosome-free peptidyl-tRNAs (with 1 or more amino acids incorporated), which drop off the ribosome during protein synthesis, or as a result of ribosome stalling. In terms of biological role, catalyzes the release of premature peptidyl moieties from peptidyl-tRNA molecules trapped in stalled 50S ribosomal subunits, and thus maintains levels of free tRNAs and 50S ribosomes. This chain is Peptidyl-tRNA hydrolase, found in Desulfovibrio desulfuricans (strain ATCC 27774 / DSM 6949 / MB).